Reading from the N-terminus, the 38-residue chain is EHIDYSQVSGDWHSLSIAADSMDKIRENGELRMHLNHL.

This sequence belongs to the calycin superfamily. Lipocalin family. As to expression, nasal mucosa.

The protein resides in the secreted. Its subcellular location is the extracellular space. Functionally, this soluble protein may play a specific role in odor discrimination and perception. The sequence is that of Odorant-binding protein 2 from Hystrix cristata (North African crested porcupine).